The chain runs to 231 residues: Ureidoacrylate amidohydrolase RutB (231 aa).

Asp-25 serves as the catalytic Proton acceptor. The active site involves Lys-134. Cys-167 (nucleophile) is an active-site residue.

This sequence belongs to the isochorismatase family. RutB subfamily.

The enzyme catalyses (Z)-3-ureidoacrylate + H2O + H(+) = (Z)-3-aminoacrylate + NH4(+) + CO2. It catalyses the reaction (Z)-3-ureidoacrylate + H2O = (Z)-3-aminoacrylate + carbamate + H(+). The catalysed reaction is (Z)-2-methylureidoacrylate + H2O + H(+) = (Z)-2-methylaminoacrylate + NH4(+) + CO2. In terms of biological role, hydrolyzes ureidoacrylate to form aminoacrylate and carbamate. The carbamate hydrolyzes spontaneously, thereby releasing one of the nitrogen atoms of the pyrimidine ring as ammonia and one of its carbon atoms as CO2. The protein is Ureidoacrylate amidohydrolase RutB of Escherichia coli (strain SMS-3-5 / SECEC).